Here is a 614-residue protein sequence, read N- to C-terminus: DNA ligase (614 aa).

Residues 29–33 (DQDYD) and 73–74 (SI) contribute to the NAD(+) site. Catalysis depends on Lys111, which acts as the N6-AMP-lysine intermediate. 3 residues coordinate NAD(+): Arg127, Glu158, and Lys270. Zn(2+) is bound by residues Cys358, Cys361, Cys374, and Cys380. The BRCT domain maps to 538–614 (TLTHELFDKK…MTETDYLSKI (77 aa)).

The protein belongs to the NAD-dependent DNA ligase family. LigA subfamily. Mg(2+) serves as cofactor. Mn(2+) is required as a cofactor.

It carries out the reaction NAD(+) + (deoxyribonucleotide)n-3'-hydroxyl + 5'-phospho-(deoxyribonucleotide)m = (deoxyribonucleotide)n+m + AMP + beta-nicotinamide D-nucleotide.. Its function is as follows. DNA ligase that catalyzes the formation of phosphodiester linkages between 5'-phosphoryl and 3'-hydroxyl groups in double-stranded DNA using NAD as a coenzyme and as the energy source for the reaction. It is essential for DNA replication and repair of damaged DNA. The protein is DNA ligase of Ruthia magnifica subsp. Calyptogena magnifica.